Here is a 371-residue protein sequence, read N- to C-terminus: tRNA-specific 2-thiouridylase MnmA (371 aa).

ATP contacts are provided by residues 13-20 (GMSGGVDS) and Met-39. Residues 99–101 (NPD) form an interaction with target base in tRNA region. The active-site Nucleophile is Cys-104. A disulfide bond links Cys-104 and Cys-200. Gly-128 provides a ligand contact to ATP. The interval 150-152 (KDQ) is interaction with tRNA. The Cysteine persulfide intermediate role is filled by Cys-200. Residues 308–309 (RY) are interaction with tRNA.

This sequence belongs to the MnmA/TRMU family.

Its subcellular location is the cytoplasm. The catalysed reaction is S-sulfanyl-L-cysteinyl-[protein] + uridine(34) in tRNA + AH2 + ATP = 2-thiouridine(34) in tRNA + L-cysteinyl-[protein] + A + AMP + diphosphate + H(+). Functionally, catalyzes the 2-thiolation of uridine at the wobble position (U34) of tRNA, leading to the formation of s(2)U34. This chain is tRNA-specific 2-thiouridylase MnmA, found in Listeria monocytogenes serotype 4a (strain HCC23).